The sequence spans 281 residues: F-actin-capping protein subunit alpha (281 aa).

The protein belongs to the F-actin-capping protein alpha subunit family. Component of the F-actin capping complex, composed of a heterodimer of an alpha and a beta subunit.

The protein localises to the cytoplasm. Its subcellular location is the cytoskeleton. Functionally, F-actin-capping proteins bind in a Ca(2+)-independent manner to the fast growing ends of actin filaments (barbed end) thereby blocking the exchange of subunits at these ends. Unlike other capping proteins (such as gelsolin and severin), these proteins do not sever actin filaments. The polypeptide is F-actin-capping protein subunit alpha (acpB) (Dictyostelium discoideum (Social amoeba)).